The primary structure comprises 267 residues: X-box-binding protein 1 (267 aa).

The Cytoplasmic portion of the chain corresponds to 1–180 (MVVVAAAPSA…VQAQLSPPQN (180 aa)). The segment at 35–56 (VPGPRAAGSEASGTPQARKRQR) is disordered. The residue at position 61 (Ser-61) is a Phosphoserine. The bZIP domain occupies 63-126 (EEKALRRKLK…HGLVVENQEL (64 aa)). Residues 65 to 87 (KALRRKLKNRVAAQTARDRKKAR) are basic motif. Residues 69-85 (RKLKNRVAAQTARDRKK) are nuclear localization signal (NLS). Positions 91 to 126 (LEQQVVDLEEENHKLQLENQLLREKTHGLVVENQEL) are leucine-zipper. The helical; Signal-anchor for type II membrane protein transmembrane segment at 181 to 198 (IFPWTLTLLPLQILSLIS) threads the bilayer. The Lumenal portion of the chain corresponds to 199-267 (FWAFWTSWTL…FVLTMYTPSL (69 aa)). The necessary for the translational pausing of its own mRNA stretch occupies residues 230–256 (QKDLVPYQPPFLCQWGPHQPSWKPLMN).

Belongs to the bZIP family. In terms of assembly, isoform 1 interacts with HM13. Isoform 1 interacts with RNF139; the interaction induces ubiquitination and degradation of isoform 1. Isoform 1 interacts (via luminal domain) with DERL1; the interaction obviates the need for ectodomain shedding prior HM13/SPP-mediated XBP1 isoform 1 cleavage. Isoform 1 interacts with isoform 2; the interaction sequesters isoform 2 from the nucleus and enhances isoform 2 degradation in the cytoplasm. Isoform 1 interacts with HDAC3 and AKT1; the interactions occur in endothelial cell (EC) under disturbed flow. Isoform 1 interacts with the oncoprotein FOS. Isoform 2 interacts with ATF6; the interaction occurs in a ER stress-dependent manner and is required for DNA binding to the unfolded protein response element (UPRE). Isoform 2 interacts with PIK3R1; the interaction is direct and induces translocation of XBP1 isoform 2 into the nucleus and the unfolded protein response (UPR) XBP1-dependent target genes activation in a ER stress- and/or insulin-dependent but PI3K-independent manner. Isoform 2 interacts with SIRT1. Isoform 2 interacts with PIK3R1 and PIK3R2; the interactions are direct and induce translocation of XBP1 isoform 2 into the nucleus and the unfolded protein response (UPR) XBP1-dependent target genes activation in a ER stress- and/or insulin-dependent but PI3K-independent manner. Isoform 2 interacts with FOXO1; the interaction is direct and leads to FOXO1 ubiquitination and degradation via the proteasome pathway in hepatocytes. In terms of processing, acetylated by EP300; acetylation positively regulates the transcriptional activity of XBP1 isoform 2. Isoform 2 is deacetylated by SIRT1; deacetylation negatively regulates the transcriptional activity of XBP1 isoform 2. Post-translationally, ubiquitinated, leading to proteasomal degradation in response to ER stress. X-box-binding protein 1, cytoplasmic form and luminal form are produced by intramembrane proteolytic cleavage of ER membrane-anchored isoform 1 triggered by HM13/SPP in a DERL1-RNF139-dependent and VCP/p97-independent manner. X-box-binding protein 1, luminal form is ubiquitinated leading to proteasomal degradation. Isoform 1 and isoform 2 are expressed at higher level in branch curves of vessel walls and in atherosclerotic plaques relative to healthy segments of the same aortas (at protein level). Expressed in skeletal muscles, plasma cells and pancreatic beta cells. Isoform 1 and isoform 2 are expressed in gonadal adipose tissue. Isoform 1 is expressed in inguinal adipose tissue.

Its subcellular location is the endoplasmic reticulum. The protein resides in the nucleus. The protein localises to the cytoplasm. It is found in the endoplasmic reticulum membrane. It localises to the membrane. Functions as a transcription factor during endoplasmic reticulum stress by regulating the unfolded protein response (UPR). Required for cardiac myogenesis and hepatogenesis during embryonic development and the development of secretory tissues such as exocrine pancreas and salivary gland. Involved in differentiation of B lymphocytes to plasma cells and production of immunoglobulins. Modulates the cellular response to ER stress in a PIK3R-dependent manner. Binds to the cis-acting X box present in the promoter regions of major histocompatibility complex class II genes. Involved in VEGF-induced endothelial cell (EC) proliferation and retinal blood vessel formation during embryonic development but also for angiogenesis in adult tissues under ischemic conditions. Also functions as a major regulator of the UPR in obesity-induced insulin resistance and type 2 diabetes for the management of obesity and diabetes prevention. In terms of biological role, plays a role in the unconventional cytoplasmic splicing processing of its own mRNA triggered by the endoplasmic reticulum (ER) transmembrane endoribonuclease ERN1: upon ER stress, the emerging XBP1 polypeptide chain, as part of a mRNA-ribosome-nascent chain (R-RNC) complex, cotranslationally recruits its own unprocessed mRNA through transient docking to the ER membrane and translational pausing, therefore facilitating efficient IRE1-mediated XBP1 mRNA isoform 2 production. In endothelial cells (EC), associated with KDR, promotes IRE1-mediated XBP1 mRNA isoform 2 production in a vascular endothelial growth factor (VEGF)-dependent manner, leading to EC proliferation and angiogenesis. Functions as a negative feed-back regulator of the potent transcription factor XBP1 isoform 2 protein levels through proteasome-mediated degradation, thus preventing the constitutive activation of the ER stress response signaling pathway. Inhibits the transactivation activity of XBP1 isoform 2 in myeloma cells. Acts as a weak transcriptional factor. Together with HDAC3, contributes to the activation of NFE2L2-mediated HMOX1 transcription factor gene expression in a PI(3)K/mTORC2/Akt-dependent signaling pathway leading to EC survival under disturbed flow/oxidative stress. Binds to the ER stress response element (ERSE) upon ER stress. Binds to the consensus 5'-GATGACGTG[TG]N(3)[AT]T-3' sequence related to cAMP responsive element (CRE)-like sequences. Binds the Tax-responsive element (TRE) present in the long terminal repeat (LTR) of T-cell leukemia virus type 1 (HTLV-I) and to the TPA response elements (TRE). Associates preferentially to the HDAC3 gene promoter region in a static flow-dependent manner. Binds to the CDH5/VE-cadherin gene promoter region. Its function is as follows. Functions as a stress-inducible potent transcriptional activator during endoplasmic reticulum (ER) stress by inducing unfolded protein response (UPR) target genes via binding to the UPR element (UPRE). Up-regulates target genes encoding ER chaperones and ER-associated degradation (ERAD) components to enhance the capacity of productive folding and degradation mechanism, respectively, in order to maintain the homeostasis of the ER under ER stress. Plays a role in the production of immunoglobulins and interleukin-6 in the presence of stimuli required for plasma cell differentiation, and promotes as well membrane phospholipid biosynthesis necessary for ER expansion. Contributes to the VEGF-induced endothelial cell (EC) growth and proliferation in a Akt/GSK-dependent and/or -independent signaling pathway, respectively, leading to beta-catenin nuclear translocation and E2F2 gene expression. Promotes umbilical vein EC apoptosis and atherosclerotisis development in a caspase-dependent signaling pathway, and contributes to VEGF-induced EC proliferation and angiogenesis in adult tissues under ischemic conditions. Involved in the regulation of endostatin-induced autophagy in EC through BECN1 transcriptional activation. Plays a role as an oncogene by promoting tumor progression: stimulates zinc finger protein SNAI1 transcription to induce epithelial-to-mesenchymal (EMT) transition, cell migration and invasion of breast cancer cells. Involved in adipocyte differentiation by regulating lipogenic gene expression during lactation. Plays a role in the survival of both dopaminergic neurons of the substantia nigra pars compacta (SNpc), by maintaining protein homeostasis and of myeloma cells. Increases insulin sensitivity in the liver as a response to a high carbohydrate diet, resulting in improved glucose tolerance. Also improves glucose homeostasis in an ER stress- and/or insulin-independent manner through both binding and proteasome-induced degradation of the transcription factor FOXO1, hence resulting in suppression of gluconeogenic genes expression and in a reduction of blood glucose levels. Controls the induction of de novo fatty acid synthesis in hepatocytes by regulating the expression of a subset of lipogenic genes in an ER stress- and UPR-independent manner. Binds to the 5'-CCACG-3' motif in the PPARG promoter. Associates preferentially to the HDAC3 gene promoter region in a disturbed flow-dependent manner. Binds to the BECN1 gene promoter region. Binds to the CDH5/VE-cadherin gene promoter region. Binds to the ER stress response element (ERSE) upon ER stress. The chain is X-box-binding protein 1 from Mus musculus (Mouse).